Reading from the N-terminus, the 419-residue chain is Serine hydroxymethyltransferase (419 aa).

(6S)-5,6,7,8-tetrahydrofolate contacts are provided by residues Leu-120 and 124-126 (GHL). An N6-(pyridoxal phosphate)lysine modification is found at Lys-229.

The protein belongs to the SHMT family. Homodimer. Pyridoxal 5'-phosphate serves as cofactor.

The protein localises to the cytoplasm. It carries out the reaction (6R)-5,10-methylene-5,6,7,8-tetrahydrofolate + glycine + H2O = (6S)-5,6,7,8-tetrahydrofolate + L-serine. Its pathway is one-carbon metabolism; tetrahydrofolate interconversion. The protein operates within amino-acid biosynthesis; glycine biosynthesis; glycine from L-serine: step 1/1. In terms of biological role, catalyzes the reversible interconversion of serine and glycine with tetrahydrofolate (THF) serving as the one-carbon carrier. This reaction serves as the major source of one-carbon groups required for the biosynthesis of purines, thymidylate, methionine, and other important biomolecules. Also exhibits THF-independent aldolase activity toward beta-hydroxyamino acids, producing glycine and aldehydes, via a retro-aldol mechanism. The sequence is that of Serine hydroxymethyltransferase from Herpetosiphon aurantiacus (strain ATCC 23779 / DSM 785 / 114-95).